The following is a 431-amino-acid chain: Homogentisate 1,2-dioxygenase (431 aa).

His-286 serves as the catalytic Proton acceptor. Positions 329 and 335 each coordinate Fe cation. Tyr-344 and His-365 together coordinate homogentisate. Position 365 (His-365) interacts with Fe cation.

Belongs to the homogentisate dioxygenase family. Hexamer; dimer of trimers. Fe cation is required as a cofactor.

The catalysed reaction is homogentisate + O2 = 4-maleylacetoacetate + H(+). It participates in amino-acid degradation; L-phenylalanine degradation; acetoacetate and fumarate from L-phenylalanine: step 4/6. Involved in the catabolism of homogentisate (2,5-dihydroxyphenylacetate or 2,5-OH-PhAc), a central intermediate in the degradation of phenylalanine and tyrosine. Catalyzes the oxidative ring cleavage of the aromatic ring of homogentisate to yield maleylacetoacetate. This chain is Homogentisate 1,2-dioxygenase, found in Pseudomonas fluorescens (strain Pf0-1).